The sequence spans 439 residues: MASNSWTANSSPGEAREDGSEGLDKGLDNDAEGVWSPDIEQSFQEALAIYPPCGRRKIILSDEGKMYGRNELIARYIKLRTGKTRTRKQVSSHIQVLARKKVREYQVGIKAMNLDQVSKDKALQSMASMSSAQIVSASVLQNKFSPPSPLPQAVFSSSSRFWSSPPLLGQQPGPSQDIKPFAQPAYPIQPPLPPALNSYESLAPLPPAAASATASAPAWQDRTIASSRLRLLEYSAFMEVQRDPDTYSKHLFVHIGQTNPAFSDPPLEAVDVRQIYDKFPEKKGGLKELYEKGPPNAFFLVKFWADLNSTIQEGPGAFYGVSSQYSSADSMTISVSTKVCSFGKQVVEKVETEYARLENGRFVYRIHRSPMCEYMINFIHKLKHLPEKYMMNSVLENFTILQVVTSRDSQETLLVIAFVFEVSTSEHGAQHHVYKLVKD.

The segment covering 1–12 (MASNSWTANSSP) has biased composition (polar residues). Residues 1 to 34 (MASNSWTANSSPGEAREDGSEGLDKGLDNDAEGV) are disordered. Ala-2 carries the N-acetylalanine modification. Residues 14–28 (EAREDGSEGLDKGLD) are compositionally biased toward basic and acidic residues. A DNA-binding region (TEA) is located at residues 28 to 104 (DNDAEGVWSP…QVLARKKVRE (77 aa)). Ser-148 is subject to Phosphoserine. A transcriptional activation region spans residues 173 to 439 (GPSQDIKPFA…QHHVYKLVKD (267 aa)).

In terms of assembly, interacts with YAP1 and WWTR1/TAZ. In terms of tissue distribution, expressed in embryos as well as in many adult tissues.

It is found in the nucleus. Functionally, transcription factor which plays a key role in the Hippo signaling pathway, a pathway involved in organ size control and tumor suppression by restricting proliferation and promoting apoptosis. The core of this pathway is composed of a kinase cascade wherein MST1/MST2, in complex with its regulatory protein SAV1, phosphorylates and activates LATS1/2 in complex with its regulatory protein MOB1, which in turn phosphorylates and inactivates YAP1 oncoprotein and WWTR1/TAZ. Acts by mediating gene expression of YAP1 and WWTR1/TAZ, thereby regulating cell proliferation, migration and epithelial mesenchymal transition (EMT) induction. This Mus musculus (Mouse) protein is Transcriptional enhancer factor TEF-5 (Tead3).